An 851-amino-acid polypeptide reads, in one-letter code: Meiotically up-regulated gene 87 protein (851 aa).

This sequence belongs to the nucleoporin interacting component (NIC) family.

The protein resides in the nucleus envelope. In terms of biological role, has a role in meiosis. This chain is Meiotically up-regulated gene 87 protein (mug87), found in Schizosaccharomyces pombe (strain 972 / ATCC 24843) (Fission yeast).